We begin with the raw amino-acid sequence, 597 residues long: Translation initiation factor IF-2 (597 aa).

Low complexity-rich tracts occupy residues 57 to 73 (GGDA…AATA) and 81 to 95 (TPAA…PASD). Residues 57–96 (GGDAAPAAASAPAAATAEPEEADETPAAAAQADAEPASDL) are disordered. The tr-type G domain occupies 98 to 271 (HRAPVVTIMG…ELEDLRADPK (174 aa)). The G1 stretch occupies residues 107–114 (GHVDHGKT). Position 107–114 (107–114 (GHVDHGKT)) interacts with GTP. Residues 132 to 136 (GITQH) form a G2 region. Residues 153–156 (DTPG) form a G3 region. Residues 153–157 (DTPGH) and 207–210 (NKVD) each bind GTP. Residues 207 to 210 (NKVD) form a G4 region. Residues 243 to 245 (SAK) are G5.

It belongs to the TRAFAC class translation factor GTPase superfamily. Classic translation factor GTPase family. IF-2 subfamily.

It localises to the cytoplasm. One of the essential components for the initiation of protein synthesis. Protects formylmethionyl-tRNA from spontaneous hydrolysis and promotes its binding to the 30S ribosomal subunits. Also involved in the hydrolysis of GTP during the formation of the 70S ribosomal complex. The chain is Translation initiation factor IF-2 from Deinococcus radiodurans (strain ATCC 13939 / DSM 20539 / JCM 16871 / CCUG 27074 / LMG 4051 / NBRC 15346 / NCIMB 9279 / VKM B-1422 / R1).